Reading from the N-terminus, the 385-residue chain is Outer membrane protein assembly factor BamB (385 aa).

The N-terminal stretch at 1 to 20 (MRKVLKKAALCTFGFSMLFG) is a signal peptide. A lipid anchor (N-palmitoyl cysteine) is attached at Cys21. The S-diacylglycerol cysteine moiety is linked to residue Cys21.

It belongs to the BamB family. As to quaternary structure, part of the Bam complex.

It is found in the cell outer membrane. Part of the outer membrane protein assembly complex, which is involved in assembly and insertion of beta-barrel proteins into the outer membrane. The chain is Outer membrane protein assembly factor BamB from Aliivibrio fischeri (strain ATCC 700601 / ES114) (Vibrio fischeri).